Consider the following 235-residue polypeptide: Ribonuclease PH (235 aa).

Phosphate contacts are provided by residues Arg86 and 124 to 126 (GTR).

Belongs to the RNase PH family. As to quaternary structure, homohexameric ring arranged as a trimer of dimers.

It catalyses the reaction tRNA(n+1) + phosphate = tRNA(n) + a ribonucleoside 5'-diphosphate. Functionally, phosphorolytic 3'-5' exoribonuclease that plays an important role in tRNA 3'-end maturation. Removes nucleotide residues following the 3'-CCA terminus of tRNAs; can also add nucleotides to the ends of RNA molecules by using nucleoside diphosphates as substrates, but this may not be physiologically important. Probably plays a role in initiation of 16S rRNA degradation (leading to ribosome degradation) during starvation. The polypeptide is Ribonuclease PH (Francisella tularensis subsp. novicida (strain U112)).